A 265-amino-acid chain; its full sequence is Ribosomal RNA small subunit methyltransferase A (265 aa).

Positions 13, 15, 40, 61, 85, and 103 each coordinate S-adenosyl-L-methionine.

It belongs to the class I-like SAM-binding methyltransferase superfamily. rRNA adenine N(6)-methyltransferase family. RsmA subfamily.

It localises to the cytoplasm. The catalysed reaction is adenosine(1518)/adenosine(1519) in 16S rRNA + 4 S-adenosyl-L-methionine = N(6)-dimethyladenosine(1518)/N(6)-dimethyladenosine(1519) in 16S rRNA + 4 S-adenosyl-L-homocysteine + 4 H(+). Specifically dimethylates two adjacent adenosines (A1518 and A1519) in the loop of a conserved hairpin near the 3'-end of 16S rRNA in the 30S particle. May play a critical role in biogenesis of 30S subunits. This chain is Ribosomal RNA small subunit methyltransferase A, found in Aromatoleum aromaticum (strain DSM 19018 / LMG 30748 / EbN1) (Azoarcus sp. (strain EbN1)).